The sequence spans 254 residues: Type III pantothenate kinase (254 aa).

6–13 provides a ligand contact to ATP; it reads DVGNTNTV. Substrate is bound by residues Tyr100 and 107–110; that span reads GADR. The active-site Proton acceptor is Asp109. Asp129 contacts K(+). Thr132 contributes to the ATP binding site. Thr184 is a substrate binding site.

Belongs to the type III pantothenate kinase family. As to quaternary structure, homodimer. NH4(+) serves as cofactor. Requires K(+) as cofactor.

The protein localises to the cytoplasm. It catalyses the reaction (R)-pantothenate + ATP = (R)-4'-phosphopantothenate + ADP + H(+). It functions in the pathway cofactor biosynthesis; coenzyme A biosynthesis; CoA from (R)-pantothenate: step 1/5. In terms of biological role, catalyzes the phosphorylation of pantothenate (Pan), the first step in CoA biosynthesis. The sequence is that of Type III pantothenate kinase from Halalkalibacterium halodurans (strain ATCC BAA-125 / DSM 18197 / FERM 7344 / JCM 9153 / C-125) (Bacillus halodurans).